The primary structure comprises 830 residues: MIAENKDYVKPDVNTLPAVLPAVAIRDVVMFPGMSLPLSVSRSKSIAAINLALDSNKYVVAVAQKEAEVEDPKAEDIYRFGVLSEITQSLKMPDGSIKVFLQGIARVKIEHLDFNNIANSWFASVFYPADEKVSGPEVTALMRQLLDEFEEYATVSRRIAVEGVSFFRQIEDPSRLADTIASNIIVKTSDRQDVLEAVNPKDRLELLIKILANEVEIISLEEKIHSKVRAQIEKNQKEYYLNEQMKAIQKELSQKDDFQKEIDELRSKIKKNGLPKNAKESAEKELDRLAKMAPFSPESTVSRTYLDWLVNMPWNSSTNDILDLKKAKEVMDADHYGLDKPKERILEYLAVSKLTNSLKGPILCFAGPPGVGKTSLAKSIASAVGRKFVRMSLGGVRDESEIRGHRRTYIGSMPGRIIQGISKAKSNNPVFLLDEIDKMGSDWRGDPAAALLELLDPEQNKDFSDHYLDVPFDVSKVMFITTANSLSSIPVTLRDRLEIIDFSGYTEYEKEAIAQNHLIPRQMKEHGLKEGSLEIGLPAVKLIMRDYVREAGVRNFEREISTICRKAAKMYVENCGKTVTVTKDNLHDFLGVPRYTNFTTEENGVGISTGLAWTSVGGETLSIEASEISDGKGRIMLTGKLGDVMKESVHAALTYARSKGYGKGIDFNKTDFHIHFPEGAVPKDGPSAGTAVTTALISLLTKNPVKKNLAMTGEVTITGRVLPIGGVKEKFMAAYREGVKTILYPHTNEKDVSEVPEVIRKQLKLIPVKHMDEIVKIAFEKGEPKSSFKKSKTAPKKESAKKAAKSKKPAVKKPAVKKTKQVKKTAKKKK.

Positions 20–215 (LPAVAIRDVV…LLIKILANEV (196 aa)) constitute a Lon N-terminal domain. 367–374 (GPPGVGKT) contributes to the ATP binding site. The Lon proteolytic domain maps to 602–781 (ENGVGISTGL…DEIVKIAFEK (180 aa)). Residues Ser687 and Lys730 contribute to the active site. The tract at residues 784–830 (PKSSFKKSKTAPKKESAKKAAKSKKPAVKKPAVKKTKQVKKTAKKKK) is disordered. The segment covering 802-830 (KAAKSKKPAVKKPAVKKTKQVKKTAKKKK) has biased composition (basic residues).

This sequence belongs to the peptidase S16 family. As to quaternary structure, homohexamer. Organized in a ring with a central cavity.

The protein resides in the cytoplasm. The catalysed reaction is Hydrolysis of proteins in presence of ATP.. In terms of biological role, ATP-dependent serine protease that mediates the selective degradation of mutant and abnormal proteins as well as certain short-lived regulatory proteins. Required for cellular homeostasis and for survival from DNA damage and developmental changes induced by stress. Degrades polypeptides processively to yield small peptide fragments that are 5 to 10 amino acids long. Binds to DNA in a double-stranded, site-specific manner. The sequence is that of Lon protease from Elusimicrobium minutum (strain Pei191).